A 336-amino-acid chain; its full sequence is 3-isopropylmalate dehydrogenase (336 aa).

Substrate-binding residues include Arg86, Arg96, Arg117, and Asp201. The Mg(2+) site is built by Asp201, Asp225, and Asp229. An NAD(+)-binding site is contributed by 258–270 (GAAFDIAGKGIAN).

The protein belongs to the isocitrate and isopropylmalate dehydrogenases family. As to quaternary structure, homotetramer. The cofactor is Mg(2+). It depends on Mn(2+) as a cofactor.

Its subcellular location is the cytoplasm. It catalyses the reaction (2R,3S)-3-isopropylmalate + NAD(+) = 4-methyl-2-oxopentanoate + CO2 + NADH. It functions in the pathway amino-acid biosynthesis; L-leucine biosynthesis; L-leucine from 3-methyl-2-oxobutanoate: step 3/4. Its function is as follows. Catalyzes the oxidation of 3-carboxy-2-hydroxy-4-methylpentanoate (3-isopropylmalate) to 3-carboxy-4-methyl-2-oxopentanoate. The product decarboxylates to 4-methyl-2 oxopentanoate. The sequence is that of 3-isopropylmalate dehydrogenase (leuB) from Saccharolobus solfataricus (strain ATCC 35092 / DSM 1617 / JCM 11322 / P2) (Sulfolobus solfataricus).